The following is a 175-amino-acid chain: MSAATKKRYITNKVGSEFYELVDEDIIAQVRQSRGNNLHEVLDQNGDSYVVSMPTKFRKSVWLRRDQFVVVRPITEGDKVKGEIEYILDQDNVLYIRELGKWPTCFEENALKMTREAKRGQTSDKMIDDDMLPPSESEEEDESEGEETYDEDDVDDEEEEEFDTYNPNRMQAPSK.

Residues 5-89 (TKKRYITNKV…VKGEIEYILD (85 aa)) enclose the S1-like domain. A compositionally biased stretch (basic and acidic residues) spans 116-128 (EAKRGQTSDKMID). The segment at 116 to 175 (EAKRGQTSDKMIDDDMLPPSESEEEDESEGEETYDEDDVDDEEEEEFDTYNPNRMQAPSK) is disordered. The span at 129 to 163 (DDMLPPSESEEEDESEGEETYDEDDVDDEEEEEFD) shows a compositional bias: acidic residues. The span at 165–175 (YNPNRMQAPSK) shows a compositional bias: polar residues.

The protein belongs to the EIF1AD family.

This chain is Probable RNA-binding protein EIF1AD, found in Caenorhabditis elegans.